The chain runs to 497 residues: Protein DETOXIFICATION 25 (497 aa).

12 consecutive transmembrane segments (helical) span residues 43-63 (LPSTLFRVMSFGCVVVAQAFI), 70-90 (GLAAYALLQSTFIRFIYGIMA), 121-141 (IVDTFIATLFVPFIVLAGPIL), 157-177 (IYPWVIPYLYSIVFTMTMQMY), 186-206 (IIGILSTLALVLDIAATWWCV), 216-236 (ALLGLNISSWSVAIAEFVYVF), 261-281 (LSISSGFMLCLEYWYMSIIVL), 291-311 (IAISAFSICQYIYSWEMNICF), 339-359 (VVLVVSAVIGVICSALCLAFG), 381-401 (IVLSISILFNIIQPILSGVAI), 416-436 (SYYAIGVPLGVLLVYVFNFGI), and 438-458 (GLWSGMLAGVGIQTLILCYVI).

This sequence belongs to the multi antimicrobial extrusion (MATE) (TC 2.A.66.1) family.

The protein resides in the membrane. This Arabidopsis thaliana (Mouse-ear cress) protein is Protein DETOXIFICATION 25.